The following is a 138-amino-acid chain: Large ribosomal subunit protein uL16 (138 aa).

Belongs to the universal ribosomal protein uL16 family. In terms of assembly, part of the 50S ribosomal subunit.

Its function is as follows. Binds 23S rRNA and is also seen to make contacts with the A and possibly P site tRNAs. The polypeptide is Large ribosomal subunit protein uL16 (Gluconobacter oxydans (strain 621H) (Gluconobacter suboxydans)).